We begin with the raw amino-acid sequence, 286 residues long: Bifunctional protein FolD (286 aa).

NADP(+) is bound by residues 166-168 (GAS) and Ile232.

The protein belongs to the tetrahydrofolate dehydrogenase/cyclohydrolase family. As to quaternary structure, homodimer.

The catalysed reaction is (6R)-5,10-methylene-5,6,7,8-tetrahydrofolate + NADP(+) = (6R)-5,10-methenyltetrahydrofolate + NADPH. It catalyses the reaction (6R)-5,10-methenyltetrahydrofolate + H2O = (6R)-10-formyltetrahydrofolate + H(+). It participates in one-carbon metabolism; tetrahydrofolate interconversion. Catalyzes the oxidation of 5,10-methylenetetrahydrofolate to 5,10-methenyltetrahydrofolate and then the hydrolysis of 5,10-methenyltetrahydrofolate to 10-formyltetrahydrofolate. This chain is Bifunctional protein FolD, found in Shewanella woodyi (strain ATCC 51908 / MS32).